Here is a 70-residue protein sequence, read N- to C-terminus: U2-agatoxin-Ao1n (70 aa).

An N-terminal signal peptide occupies residues 1–20 (MRAIISLLLISAMVFYIIAA). The propeptide occupies 21 to 34 (VPEEEGLQLSEDER). Intrachain disulfides connect C37–C53, C44–C58, and C52–C68. L69 is subject to Leucine amide.

It belongs to the neurotoxin 01 (U2-agtx) family. Expressed by the venom gland.

It is found in the secreted. Its function is as follows. Insect active toxin causing rapid but reversible paralysis in crickets. No activity shown in mammals. Does not show effect on mammalian voltage-gated calcium channels. The protein is U2-agatoxin-Ao1n of Agelena orientalis (Funnel-web spider).